The chain runs to 261 residues: Na(+)-translocating NADH-quinone reductase subunit C (261 aa).

Residues 12 to 32 form a helical membrane-spanning segment; that stretch reads LGVVIGLSLVCSIIVSTAAVG. Thr-229 carries the post-translational modification FMN phosphoryl threonine.

It belongs to the NqrC family. In terms of assembly, composed of six subunits; NqrA, NqrB, NqrC, NqrD, NqrE and NqrF. Requires FMN as cofactor.

Its subcellular location is the cell inner membrane. It catalyses the reaction a ubiquinone + n Na(+)(in) + NADH + H(+) = a ubiquinol + n Na(+)(out) + NAD(+). Its function is as follows. NQR complex catalyzes the reduction of ubiquinone-1 to ubiquinol by two successive reactions, coupled with the transport of Na(+) ions from the cytoplasm to the periplasm. NqrA to NqrE are probably involved in the second step, the conversion of ubisemiquinone to ubiquinol. In Vibrio parahaemolyticus serotype O3:K6 (strain RIMD 2210633), this protein is Na(+)-translocating NADH-quinone reductase subunit C.